Consider the following 141-residue polypeptide: Hemoglobin subunit alpha-1 (141 aa).

Positions 1-141 constitute a Globin domain; the sequence is VLTDAEKKEV…VATVLTSKYR (141 aa). An O2-binding site is contributed by His58. Heme b is bound at residue His87.

This sequence belongs to the globin family. In terms of assembly, heterotetramer of two alpha chains and two beta chains. Red blood cells.

Functionally, involved in oxygen transport from the lung to the various peripheral tissues. This is Hemoglobin subunit alpha-1 from Tachyglossus aculeatus aculeatus (Southeast Australian short-beaked echidna).